Here is an 832-residue protein sequence, read N- to C-terminus: MIAWRLPLCVLLVASVESHLGALGPKNVSQKDAEFERTYADDVNSELVNIYTFNHTVTRNRTEGVRVSVNVLNKQKGAPLLFVVRQKEAVVSFQVPLILRGLYQRKYLYQKVERTLCQPPTKNESEIQFFYVDVSTLSPVNTTYQLRVNRVDNFVLRTGELFTFNTTAAQPQYFKYEFPDGVDSVIVKVTSKKAFPCSVISIQDVLCPVYDLDNNVAFIGMYQTMTKKAAITVQRKDFPSNSFYVVVVVKTEDQACGGSLPFYPFVEDEPVDQGHRQKTLSVLVSQAVTSEAYVGGMLFCLGIFLSFYLLTVLLACWENWRQRKKTLLLAIDRACPESGHARVLADSFPGSAPYEGYNYGSFENGSGSTDGLVESAGSGDLSYSYQDRSFDAVGPRPRLDSMSSVEEDDYDTLTDIDSDKNVIRTKQYLCVADLARKDKRVLRKKYQIYFWNIATIAVFYALPVVQLVITYQTVVNVTGNQDICYYNFLCAHPLGNLSAFNNILSNLGYILLGLLFLLIILQREINHNRALLRNDLYALECGIPKHFGLFYAMGTALMMEGLLSACYHVCPNYTNFQFDTSFMYMIAGLCMLKLYQKRHPDINASAYSAYACLAIVIFFSVLGVVFGKGNTAFWIVFSVIHIISTLLLSTQLYYMGRWKLDSGIFRRILHVLYTDCIRQCSGPLYTDRMVLLVMGNIINWSLAAYGLIMRPNDFASYLLAIGICNLLLYFAFYIIMKLRSGERIKLIPLLCIVCTSVVWGFALFFFFQGLSTWQKTPAESREHNRDCILLDFFDDHDIWHFLSSIAMFGSFLVLLTLDDDLDTVQRDKIYVF.

Positions 1 to 18 (MIAWRLPLCVLLVASVES) are cleaved as a signal peptide. Residues 19–293 (HLGALGPKNV…VSQAVTSEAY (275 aa)) lie on the Extracellular side of the membrane. 6 N-linked (GlcNAc...) asparagine glycosylation sites follow: asparagine 27, asparagine 54, asparagine 60, asparagine 123, asparagine 141, and asparagine 165. A helical transmembrane segment spans residues 294–314 (VGGMLFCLGIFLSFYLLTVLL). Topologically, residues 315–447 (ACWENWRQRK…DKRVLRKKYQ (133 aa)) are cytoplasmic. A phosphoserine mark is found at serine 401, serine 403, and serine 404. Residues 448–468 (IYFWNIATIAVFYALPVVQLV) traverse the membrane as a helical segment. Topologically, residues 469–499 (ITYQTVVNVTGNQDICYYNFLCAHPLGNLSA) are extracellular. Residues asparagine 476 and asparagine 496 are each glycosylated (N-linked (GlcNAc...) asparagine). Residues 500 to 520 (FNNILSNLGYILLGLLFLLII) traverse the membrane as a helical segment. Topologically, residues 521-546 (LQREINHNRALLRNDLYALECGIPKH) are cytoplasmic. Residues 547 to 567 (FGLFYAMGTALMMEGLLSACY) form a helical membrane-spanning segment. Over 568-605 (HVCPNYTNFQFDTSFMYMIAGLCMLKLYQKRHPDINAS) the chain is Extracellular. 2 N-linked (GlcNAc...) asparagine glycosylation sites follow: asparagine 572 and asparagine 603. Residues 606–626 (AYSAYACLAIVIFFSVLGVVF) traverse the membrane as a helical segment. At 627 to 631 (GKGNT) the chain is on the cytoplasmic side. The helical transmembrane segment at 632–652 (AFWIVFSVIHIISTLLLSTQL) threads the bilayer. Residues 653–688 (YYMGRWKLDSGIFRRILHVLYTDCIRQCSGPLYTDR) lie on the Extracellular side of the membrane. A helical transmembrane segment spans residues 689-709 (MVLLVMGNIINWSLAAYGLIM). Topologically, residues 710-715 (RPNDFA) are cytoplasmic. Residues 716–736 (SYLLAIGICNLLLYFAFYIIM) form a helical membrane-spanning segment. Over 737-746 (KLRSGERIKL) the chain is Extracellular. The chain crosses the membrane as a helical span at residues 747 to 767 (IPLLCIVCTSVVWGFALFFFF). The Cytoplasmic segment spans residues 768 to 796 (QGLSTWQKTPAESREHNRDCILLDFFDDH). The helical transmembrane segment at 797-817 (DIWHFLSSIAMFGSFLVLLTL) threads the bilayer. At 818-832 (DDDLDTVQRDKIYVF) the chain is on the extracellular side.

Belongs to the SID1 family. In terms of assembly, interacts with adapter protein complex 1 (AP-1) and AP-2, but not AP-3 and AP-4. Interacts with LAMP2. Glycosylated. In terms of tissue distribution, widely expressed, including in the liver, brain and kidney (at protein level).

The protein localises to the lysosome membrane. Its subcellular location is the cell membrane. Its function is as follows. Mediates the translocation of RNA and DNA across the lysosomal membrane during RNA and DNA autophagy (RDA), a process in which RNA and DNA is directly imported into lysosomes in an ATP-dependent manner, and degraded. Involved in the uptake of single-stranded oligonucleotides by living cells, a process called gymnosis. In vitro, mediates the uptake of linear DNA more efficiently than that of circular DNA, but exhibits similar uptake efficacy toward RNA and DNA. Binds long double-stranded RNA (dsRNA) (500 - 700 base pairs), but not dsRNA shorter than 100 bp. This chain is SID1 transmembrane family member 2 (Sidt2), found in Mus musculus (Mouse).